An 825-amino-acid chain; its full sequence is BEN domain-containing protein 3 (825 aa).

Acidic residues predominate over residues 1–11; it reads MNSTEISEDVE. Positions 1–35 are disordered; that stretch reads MNSTEISEDVEEVLKNNPVKAEGSDATLDCSRNSR. Lys-20 is covalently cross-linked (Glycyl lysine isopeptide (Lys-Gly) (interchain with G-Cter in SUMO); alternate). Lys-20 is covalently cross-linked (Glycyl lysine isopeptide (Lys-Gly) (interchain with G-Cter in SUMO1); alternate). Lys-20 participates in a covalent cross-link: Glycyl lysine isopeptide (Lys-Gly) (interchain with G-Cter in SUMO2); alternate. Glycyl lysine isopeptide (Lys-Gly) (interchain with G-Cter in SUMO2) cross-links involve residues Lys-39, Lys-54, Lys-56, Lys-71, Lys-126, Lys-127, Lys-135, Lys-140, Lys-156, and Lys-174. Positions 52 to 122 are disordered; it reads SSKRKQLDSD…EEEPSTEATV (71 aa). The Nuclear localization signal motif lies at 54 to 56; it reads KRK. The BEN 1 domain occupies 239 to 340; sequence PPPEYQLTAS…DFFSRFWAQR (102 aa). A Phosphoserine modification is found at Ser-376. Residues 384–484 enclose the BEN 2 domain; that stretch reads ASDHVVDTQD…DELEGLGLEG (101 aa). Lys-424 participates in a covalent cross-link: Glycyl lysine isopeptide (Lys-Gly) (interchain with G-Cter in SUMO2). Ser-486 is modified (phosphoserine). A Glycyl lysine isopeptide (Lys-Gly) (interchain with G-Cter in SUMO); alternate cross-link involves residue Lys-509. A Glycyl lysine isopeptide (Lys-Gly) (interchain with G-Cter in SUMO2); alternate cross-link involves residue Lys-509. A Glycyl lysine isopeptide (Lys-Gly) (interchain with G-Cter in SUMO2) cross-link involves residue Lys-525. The region spanning 547–647 is the BEN 3 domain; sequence GSDCLLSKEQ…ERCRRRDTEQ (101 aa). A Glycyl lysine isopeptide (Lys-Gly) (interchain with G-Cter in SUMO2) cross-link involves residue Lys-697. Residues 712–813 form the BEN 4 domain; sequence VPSPYLLSDK…ERCRRPNRKK (102 aa).

In terms of assembly, homooligomer, probably a homooctamer. Interacts with HDAC2 and HDAC3, but not HDAC1. Interacts with SALL4. Interacts with SMARCA5/SNF2H, BAZ2A/TIP5 and USP21. Interacts with the nucleosome remodeling and histone deacetylase (NuRD) repressor complex. Interacts (via BEN domains 1 and 3) with ERCC6L (via N-terminal TPR repeat); the interaction is direct. Sumoylated at Lys-20 by SUMO1 and at Lys-509 by SUMO1, SUMO2 and SUMO3. Sumoylation probably occurs sequentially, with that of Lys-20 preceding that of Lys-509. It does not alter association with heterochromatin, but is required for the repression of transcription.

It localises to the nucleus. The protein localises to the nucleolus. In terms of biological role, transcriptional repressor which associates with the NoRC (nucleolar remodeling complex) complex and plays a key role in repressing rDNA transcription. The sumoylated form modulates the stability of the NoRC complex component BAZ2A/TIP5 by controlling its USP21-mediated deubiquitination. Binds to unmethylated major satellite DNA and is involved in the recruitment of the Polycomb repressive complex 2 (PRC2) to major satellites. Stimulates the ERCC6L translocase and ATPase activities. This Mus musculus (Mouse) protein is BEN domain-containing protein 3 (Bend3).